The sequence spans 209 residues: NADH-quinone oxidoreductase subunit C (209 aa).

This sequence belongs to the complex I 30 kDa subunit family. NDH-1 is composed of 14 different subunits. Subunits NuoB, C, D, E, F, and G constitute the peripheral sector of the complex.

It is found in the cell inner membrane. The enzyme catalyses a quinone + NADH + 5 H(+)(in) = a quinol + NAD(+) + 4 H(+)(out). Its function is as follows. NDH-1 shuttles electrons from NADH, via FMN and iron-sulfur (Fe-S) centers, to quinones in the respiratory chain. The immediate electron acceptor for the enzyme in this species is believed to be ubiquinone. Couples the redox reaction to proton translocation (for every two electrons transferred, four hydrogen ions are translocated across the cytoplasmic membrane), and thus conserves the redox energy in a proton gradient. In Phenylobacterium zucineum (strain HLK1), this protein is NADH-quinone oxidoreductase subunit C.